The chain runs to 518 residues: MCRVQGMIEEIVNRLRGKLIVSCQPVPESPFDNVASVVAYARAAEASGASGLRIEGAANVAAAAQASTLPVIGLIKRDLDDSPVRITPFLEDVAALCDAGAAIVAVDATDRRRPVPAAELIGEIKRRGRIAMADISTLAEARNALAAGADIIGTTMSGYTGEGPTPKDPDLDLVAHCSRLGSFLIAEGRYNSPQQAGEAIRAGADAVVVGSAITRPEHITGWFRDAVESAAKPSSPVLAFDIGGTKTLAALVRGREILERRVMTTPASVGSESWIGAIASLSADWQGRYQRAAIAVTGRVDGEIWSSLNPETLAIPPDYPLGRRMGAALGAPVEVINDAQAAAWGEYRFGAARGRDMVFLTISSGIGGGIVLGGRLIRGARGIAGSLGQVLVAGPSGFVRLETLASGFGIAKMALEAGHAGDARSVFSAAAAGEGWARRILLDAASQLAAAVAGLQAIVDPECIVIGGGVGMADGFLDMLREALGSHSAVMRPDIVAAELGADAGIIGVADLAATYFS.

The manNAc-6-P epimerase stretch occupies residues 1-234 (MCRVQGMIEE…DAVESAAKPS (234 aa)). Residues 235–518 (SPVLAFDIGG…VADLAATYFS (284 aa)) form a manNAc kinase region. ATP is bound by residues 239-246 (AFDIGGTK) and 365-372 (GIGGGIVL).

This sequence in the N-terminal section; belongs to the NanE family. The protein in the C-terminal section; belongs to the ROK (NagC/XylR) family. NanK subfamily.

The catalysed reaction is an N-acyl-D-glucosamine 6-phosphate = an N-acyl-D-mannosamine 6-phosphate. It carries out the reaction an N-acyl-D-mannosamine + ATP = an N-acyl-D-mannosamine 6-phosphate + ADP + H(+). The protein operates within amino-sugar metabolism; N-acetylneuraminate degradation; D-fructose 6-phosphate from N-acetylneuraminate: step 2/5. Its pathway is amino-sugar metabolism; N-acetylneuraminate degradation; D-fructose 6-phosphate from N-acetylneuraminate: step 3/5. In terms of biological role, converts N-acetylmannosamine-6-phosphate (ManNAc-6-P) to N-acetylglucosamine-6-phosphate (GlcNAc-6-P). Catalyzes the phosphorylation of N-acetylmannosamine (ManNAc) to ManNAc-6-P. This chain is Bifunctional enzyme NanE/NanK (nanEK), found in Brucella melitensis biotype 1 (strain ATCC 23456 / CCUG 17765 / NCTC 10094 / 16M).